We begin with the raw amino-acid sequence, 488 residues long: Putative BTB/POZ domain-containing protein L674 (488 aa).

The BTB domain maps to 83 to 150 (NIVYFNIGGK…VKNQKCPINN (68 aa)).

The protein belongs to the mimivirus BTB/WD family.

This is Putative BTB/POZ domain-containing protein L674 from Acanthamoeba polyphaga (Amoeba).